The primary structure comprises 129 residues: Large ribosomal subunit protein bL20 (129 aa).

Belongs to the bacterial ribosomal protein bL20 family.

Functionally, binds directly to 23S ribosomal RNA and is necessary for the in vitro assembly process of the 50S ribosomal subunit. It is not involved in the protein synthesizing functions of that subunit. The protein is Large ribosomal subunit protein bL20 of Mycolicibacterium gilvum (strain PYR-GCK) (Mycobacterium gilvum (strain PYR-GCK)).